We begin with the raw amino-acid sequence, 247 residues long: Retbindin (247 aa).

An N-terminal signal peptide occupies residues 1-31 (MAHEGHSQHSGLVWALRPILAWIFLVACGWS). Cystine bridges form between Cys-99–Cys-169, Cys-106–Cys-146, Cys-139–Cys-183, and Cys-152–Cys-165.

It belongs to the folate receptor family. In terms of processing, not N-glycosylated. As to expression, expressed in the peripheral retina where it localizes to the inter-photoreceptor matrix (at protein level). May be produced by rod photoreceptors (at protein level).

It localises to the secreted. The protein localises to the extracellular space. The protein resides in the extracellular matrix. Its subcellular location is the interphotoreceptor matrix. It is found in the cell membrane. Functionally, riboflavin-binding protein which might have a role in retinal flavin transport. This is Retbindin (Rtbdn) from Mus musculus (Mouse).